The chain runs to 268 residues: Ribosomal RNA large subunit methyltransferase E (268 aa).

Residues 1–60 (MKPPRSRSGSSKDTGPKRIPGKALKSASNPGENDATLDSATARTARNKTVSLRTARGRTT) are disordered. A compositionally biased stretch (polar residues) spans 26-52 (SASNPGENDATLDSATARTARNKTVSL). Residues Gly-115, Trp-117, Asp-133, Asp-149, and Asp-173 each contribute to the S-adenosyl-L-methionine site. The Proton acceptor role is filled by Lys-213.

It belongs to the class I-like SAM-binding methyltransferase superfamily. RNA methyltransferase RlmE family.

The protein localises to the cytoplasm. The enzyme catalyses uridine(2552) in 23S rRNA + S-adenosyl-L-methionine = 2'-O-methyluridine(2552) in 23S rRNA + S-adenosyl-L-homocysteine + H(+). In terms of biological role, specifically methylates the uridine in position 2552 of 23S rRNA at the 2'-O position of the ribose in the fully assembled 50S ribosomal subunit. The protein is Ribosomal RNA large subunit methyltransferase E of Gluconobacter oxydans (strain 621H) (Gluconobacter suboxydans).